An 863-amino-acid chain; its full sequence is Adenosylcobalamin biosynthesis bifunctional protein CobDQ (863 aa).

Positions 1 to 373 are putative threonine-phosphate decarboxylase; the sequence is MNLPEHGGNL…LKSRKKTPSI (373 aa). Residues 6-7, N30, and N159 each bind O-phospho-L-threonine; that span reads HG. K214 carries the N6-(pyridoxal phosphate)lysine modification. The O-phospho-L-threonine site is built by R323 and R337. The cobyric acid synthase stretch occupies residues 374 to 863; sequence MFQGTASNVG…NLIYRKLGLG (490 aa). In terms of domain architecture, GATase cobBQ-type spans 622–810; that stretch reads RLDVVLIDIP…IHGIFDKDEF (189 aa). The active-site Nucleophile is the C704. H802 is a catalytic residue.

In the N-terminal section; belongs to the class-II pyridoxal-phosphate-dependent aminotransferase family. It in the C-terminal section; belongs to the CobB/CobQ family. CobQ subfamily. Pyridoxal 5'-phosphate serves as cofactor.

The enzyme catalyses O-phospho-L-threonine + H(+) = (R)-1-aminopropan-2-yl phosphate + CO2. The protein operates within cofactor biosynthesis; adenosylcobalamin biosynthesis. Its function is as follows. Catalyzes two activities which are involved in the adenosylcobalamin biosynthesis: decarboxylates L-threonine-O-3-phosphate to yield (R)-1-amino-2-propanol O-2-phosphate, the precursor for the linkage between the nucleotide loop and the corrin ring in cobalamin, and catalyzes amidations at positions B, D, E, and G on adenosylcobyrinic A,C-diamide. NH(2) groups are provided by glutamine, and one molecule of ATP is hydrogenolyzed for each amidation. The chain is Adenosylcobalamin biosynthesis bifunctional protein CobDQ (cobDQ) from Leptospira interrogans serogroup Icterohaemorrhagiae serovar Lai (strain 56601).